A 143-amino-acid polypeptide reads, in one-letter code: Large ribosomal subunit protein eL28z (143 aa).

This sequence belongs to the eukaryotic ribosomal protein eL28 family. In terms of assembly, component of the large ribosomal subunit. In terms of tissue distribution, expressed in seedlings, roots, stems, leaves, inflorescences and siliques.

The protein resides in the cytoplasm. Its subcellular location is the nucleus. The protein localises to the nucleolus. It localises to the nucleoplasm. Functionally, component of the large ribosomal subunit. Essential in leaf polarity establishment, probably having a role for translation in leaf dorsoventral patterning to specify leaf adaxial identity. The sequence is that of Large ribosomal subunit protein eL28z from Arabidopsis thaliana (Mouse-ear cress).